Consider the following 365-residue polypeptide: tRNA/tmRNA (uracil-C(5))-methyltransferase (365 aa).

S-adenosyl-L-methionine is bound by residues Q189, Y217, N222, E238, and D298. The active-site Nucleophile is C323. Residue E357 is the Proton acceptor of the active site.

Belongs to the class I-like SAM-binding methyltransferase superfamily. RNA M5U methyltransferase family. TrmA subfamily.

It catalyses the reaction uridine(54) in tRNA + S-adenosyl-L-methionine = 5-methyluridine(54) in tRNA + S-adenosyl-L-homocysteine + H(+). The catalysed reaction is uridine(341) in tmRNA + S-adenosyl-L-methionine = 5-methyluridine(341) in tmRNA + S-adenosyl-L-homocysteine + H(+). In terms of biological role, dual-specificity methyltransferase that catalyzes the formation of 5-methyluridine at position 54 (m5U54) in all tRNAs, and that of position 341 (m5U341) in tmRNA (transfer-mRNA). This chain is tRNA/tmRNA (uracil-C(5))-methyltransferase, found in Shewanella sp. (strain W3-18-1).